Consider the following 476-residue polypeptide: Protein transport protein Sec61 subunit alpha isoform 1 (476 aa).

Over 2–28 (AIKFLEVIKPFCVILPEIQKPERKIQF) the chain is Cytoplasmic. A helical transmembrane segment spans residues 29 to 46 (KEKVLWTAITLFIFLVCC). Residues 47–80 (QIPLFGIMSSDSADPFYWMRVILASNRGTLMELG) are Lumenal-facing. Residues 81–97 (ISPIVTSGLIMQLLAGA) traverse the membrane as a helical segment. Over 98–109 (KIIEVGDTPKDR) the chain is Cytoplasmic. Residues 110-131 (ALFNGAQKLFGMIITIGQSIVY) form a helical membrane-spanning segment. Over 132 to 148 (VMTGMYGDPSEMGAGIC) the chain is Lumenal. A helical transmembrane segment spans residues 149–167 (LLITIQLFVAGLIVLLLDE). The Cytoplasmic segment spans residues 168 to 177 (LLQKGYGLGS). Residues 178–196 (GISLFIATNICETIVWKAF) form a helical membrane-spanning segment. The Lumenal segment spans residues 197–241 (SPTTVNTGRGMEFEGAIIALFHLLATRTDKVRALREAFYRQNLPN). A helical membrane pass occupies residues 242 to 259 (LMNLIATIFVFAVVIYFQ). At 260–285 (GFRVDLPIKSARYRGQYNTYPIKLFY) the chain is on the cytoplasmic side. A helical membrane pass occupies residues 286–306 (TSNIPIILQSALVSNLYVISQ). Residues 307–356 (MLSARFSGNLLVSLLGTWSDTSSGGPARAYPVGGLCHYLSPPESFGSVLE) lie on the Lumenal side of the membrane. A helical membrane pass occupies residues 357 to 379 (DPVHAVVYIVFMLGSCAFFSKTW). At 380–420 (IEVSGSSAKDVAKQLKEQQMVMRGHRETSMVHELNRYIPTA) the chain is on the cytoplasmic side. A helical transmembrane segment spans residues 421–437 (AAFGGLCIGALSVLADF). The Lumenal segment spans residues 438 to 443 (LGAIGS). The chain crosses the membrane as a helical span at residues 444–458 (GTGILLAVTIIYQYF). At 459 to 476 (EIFVKEQSEVGSMGALLF) the chain is on the cytoplasmic side.

It belongs to the SecY/SEC61-alpha family. As to quaternary structure, the SEC61 channel-forming translocon complex consists of channel-forming core components SEC61A1, SEC61B and SEC61G and different auxiliary components such as SEC62 and SEC63. The SEC61 channel associates with the multi-pass translocon (MPT) complex.

It localises to the endoplasmic reticulum membrane. Functionally, component of SEC61 channel-forming translocon complex that mediates transport of signal peptide-containing precursor polypeptides across the endoplasmic reticulum (ER). Forms a ribosome receptor and a gated pore in the ER membrane, both functions required for cotranslational translocation of nascent polypeptides. May cooperate with auxiliary protein SEC62, SEC63 and HSPA5/BiP to enable post-translational transport of small presecretory proteins. The SEC61 channel is also involved in ER membrane insertion of transmembrane proteins: it mediates membrane insertion of the first few transmembrane segments of proteins, while insertion of subsequent transmembrane regions of multi-pass membrane proteins is mediated by the multi-pass translocon (MPT) complex. The SEC61 channel cooperates with the translocating protein TRAM1 to import nascent proteins into the ER. Controls the passive efflux of calcium ions from the ER lumen to the cytosol through SEC61 channel, contributing to the maintenance of cellular calcium homeostasis. Plays a critical role in nephrogenesis, specifically at pronephros stage. The protein is Protein transport protein Sec61 subunit alpha isoform 1 (SEC61A1) of Canis lupus familiaris (Dog).